The following is a 194-amino-acid chain: Small ribosomal subunit protein eS7 (194 aa).

Belongs to the eukaryotic ribosomal protein eS7 family.

The polypeptide is Small ribosomal subunit protein eS7 (RpS7) (Drosophila melanogaster (Fruit fly)).